The primary structure comprises 69 residues: MKKLLIRLIKFYRKYISPGRSSCCRFVPTCSQYAIDAINKYGAFKGSALAVYRILRCNPFCKGGYDPVR.

It belongs to the UPF0161 family.

The protein localises to the cell membrane. Functionally, could be involved in insertion of integral membrane proteins into the membrane. The polypeptide is Putative membrane protein insertion efficiency factor (Clostridium beijerinckii (strain ATCC 51743 / NCIMB 8052) (Clostridium acetobutylicum)).